The sequence spans 693 residues: Ion-translocating oxidoreductase complex subunit C (693 aa).

2 4Fe-4S ferredoxin-type domains span residues 368 to 397 and 407 to 436; these read MEPV…QQLY and KARD…VQYY. Residues cysteine 377, cysteine 380, cysteine 383, cysteine 387, cysteine 416, cysteine 419, cysteine 422, and cysteine 426 each contribute to the [4Fe-4S] cluster site. Basic and acidic residues predominate over residues 539–548; sequence REERVREKQS. Positions 539 to 564 are disordered; it reads REERVREKQSQQETPATEVTPEELDP.

It belongs to the 4Fe4S bacterial-type ferredoxin family. RnfC subfamily. The complex is composed of six subunits: RnfA, RnfB, RnfC, RnfD, RnfE and RnfG. It depends on [4Fe-4S] cluster as a cofactor.

Its subcellular location is the cell inner membrane. Its function is as follows. Part of a membrane-bound complex that couples electron transfer with translocation of ions across the membrane. The polypeptide is Ion-translocating oxidoreductase complex subunit C (Pectobacterium atrosepticum (strain SCRI 1043 / ATCC BAA-672) (Erwinia carotovora subsp. atroseptica)).